The primary structure comprises 313 residues: Adhesin MafA 2 (313 aa).

The signal sequence occupies residues 1–14 (MKTLLLLIPLVLTA). Residue Cys15 is the site of N-palmitoyl cysteine attachment. Residue Cys15 is the site of S-diacylglycerol cysteine attachment. Polar residues predominate over residues 282 to 297 (GDTTAQNRPDFKQNNG). The interval 282 to 313 (GDTTAQNRPDFKQNNGKKPDVGNEVIRRRKGG) is disordered.

It belongs to the MafA family.

It is found in the cell outer membrane. The sequence is that of Adhesin MafA 2 (mafA2) from Neisseria meningitidis serogroup A / serotype 4A (strain DSM 15465 / Z2491).